A 139-amino-acid chain; its full sequence is Histone H3-like 5 (139 aa).

Over residues 1–10 (MARTKQTARI) the composition is skewed to polar residues. Residues 1-43 (MARTKQTARISTGGKAPRKQLAPKAARQSAPATGGVKKPHRFR) are disordered. The residue at position 5 (lysine 5) is an N6,N6,N6-trimethyllysine; alternate. Lysine 5 is modified (N6,N6-dimethyllysine; alternate). Lysine 5 is modified (N6-methyllysine; alternate). A Phosphoserine modification is found at serine 11. A Phosphothreonine modification is found at threonine 12. Lysine 15 is subject to N6-acetyllysine. An N6-methyllysine; alternate mark is found at lysine 19 and lysine 24. 2 positions are modified to N6-acetyllysine; alternate: lysine 19 and lysine 24. A Phosphoserine modification is found at serine 29. At lysine 37 the chain carries N6,N6,N6-trimethyllysine; alternate. Position 37 is an N6,N6-dimethyllysine; alternate (lysine 37). N6-methyllysine; alternate is present on lysine 37.

The protein belongs to the histone H3 family. As to quaternary structure, the nucleosome is a histone octamer containing two molecules each of H2A, H2B, H3 and H4 assembled in one H3-H4 heterotetramer and two H2A-H2B heterodimers. The octamer wraps approximately 147 bp of DNA.

It localises to the nucleus. The protein localises to the chromosome. In terms of biological role, core component of nucleosome. Nucleosomes wrap and compact DNA into chromatin, limiting DNA accessibility to the cellular machineries which require DNA as a template. Histones thereby play a central role in transcription regulation, DNA repair, DNA replication and chromosomal stability. DNA accessibility is regulated via a complex set of post-translational modifications of histones, also called histone code, and nucleosome remodeling. In Arabidopsis thaliana (Mouse-ear cress), this protein is Histone H3-like 5.